The chain runs to 809 residues: LPS-assembly protein LptD (809 aa).

The first 22 residues, 1–22 (MRRALRLLPLPLSIAICLPAMA), serve as a signal peptide directing secretion.

It belongs to the LptD family. Component of the lipopolysaccharide transport and assembly complex. Interacts with LptE and LptA.

It localises to the cell outer membrane. Functionally, together with LptE, is involved in the assembly of lipopolysaccharide (LPS) at the surface of the outer membrane. The chain is LPS-assembly protein LptD from Xanthomonas euvesicatoria pv. vesicatoria (strain 85-10) (Xanthomonas campestris pv. vesicatoria).